We begin with the raw amino-acid sequence, 103 residues long: Large ribosomal subunit protein uL24 (103 aa).

The protein belongs to the universal ribosomal protein uL24 family. As to quaternary structure, part of the 50S ribosomal subunit.

One of two assembly initiator proteins, it binds directly to the 5'-end of the 23S rRNA, where it nucleates assembly of the 50S subunit. Functionally, one of the proteins that surrounds the polypeptide exit tunnel on the outside of the subunit. This chain is Large ribosomal subunit protein uL24, found in Actinobacillus succinogenes (strain ATCC 55618 / DSM 22257 / CCUG 43843 / 130Z).